Here is a 231-residue protein sequence, read N- to C-terminus: Adenosine 5'-phosphosulfate reductase (231 aa).

[4Fe-4S] cluster-binding residues include cysteine 118, cysteine 119, cysteine 201, and cysteine 204. Cysteine 227 (nucleophile; cysteine thiosulfonate intermediate) is an active-site residue.

This sequence belongs to the PAPS reductase family. CysH subfamily. Requires [4Fe-4S] cluster as cofactor.

It is found in the cytoplasm. It catalyses the reaction [thioredoxin]-disulfide + sulfite + AMP + 2 H(+) = adenosine 5'-phosphosulfate + [thioredoxin]-dithiol. Its pathway is sulfur metabolism; hydrogen sulfide biosynthesis; sulfite from sulfate. Functionally, catalyzes the formation of sulfite from adenosine 5'-phosphosulfate (APS) using thioredoxin as an electron donor. The polypeptide is Adenosine 5'-phosphosulfate reductase (Halalkalibacterium halodurans (strain ATCC BAA-125 / DSM 18197 / FERM 7344 / JCM 9153 / C-125) (Bacillus halodurans)).